The chain runs to 187 residues: Orotate phosphoribosyltransferase (187 aa).

5-phospho-alpha-D-ribose 1-diphosphate contacts are provided by residues Arg-103, Lys-104, Lys-107, and 129-137 (EDVTTSGGS). Orotate is bound by residues Thr-133 and Arg-161.

It belongs to the purine/pyrimidine phosphoribosyltransferase family. PyrE subfamily. Homodimer. Mg(2+) serves as cofactor.

The catalysed reaction is orotidine 5'-phosphate + diphosphate = orotate + 5-phospho-alpha-D-ribose 1-diphosphate. It functions in the pathway pyrimidine metabolism; UMP biosynthesis via de novo pathway; UMP from orotate: step 1/2. In terms of biological role, catalyzes the transfer of a ribosyl phosphate group from 5-phosphoribose 1-diphosphate to orotate, leading to the formation of orotidine monophosphate (OMP). The sequence is that of Orotate phosphoribosyltransferase from Methanosarcina acetivorans (strain ATCC 35395 / DSM 2834 / JCM 12185 / C2A).